Reading from the N-terminus, the 888-residue chain is Alanine--tRNA ligase (888 aa).

Residues His564, His568, Cys676, and His680 each coordinate Zn(2+).

The protein belongs to the class-II aminoacyl-tRNA synthetase family. Zn(2+) serves as cofactor.

The protein localises to the cytoplasm. It carries out the reaction tRNA(Ala) + L-alanine + ATP = L-alanyl-tRNA(Ala) + AMP + diphosphate. Catalyzes the attachment of alanine to tRNA(Ala) in a two-step reaction: alanine is first activated by ATP to form Ala-AMP and then transferred to the acceptor end of tRNA(Ala). Also edits incorrectly charged Ser-tRNA(Ala) and Gly-tRNA(Ala) via its editing domain. The sequence is that of Alanine--tRNA ligase from Mesorhizobium japonicum (strain LMG 29417 / CECT 9101 / MAFF 303099) (Mesorhizobium loti (strain MAFF 303099)).